We begin with the raw amino-acid sequence, 192 residues long: Peptidyl-tRNA hydrolase (192 aa).

Residue tyrosine 17 coordinates tRNA. Histidine 22 serves as the catalytic Proton acceptor. Residues phenylalanine 68, asparagine 70, and asparagine 116 each contribute to the tRNA site.

It belongs to the PTH family. As to quaternary structure, monomer.

Its subcellular location is the cytoplasm. The catalysed reaction is an N-acyl-L-alpha-aminoacyl-tRNA + H2O = an N-acyl-L-amino acid + a tRNA + H(+). In terms of biological role, hydrolyzes ribosome-free peptidyl-tRNAs (with 1 or more amino acids incorporated), which drop off the ribosome during protein synthesis, or as a result of ribosome stalling. Functionally, catalyzes the release of premature peptidyl moieties from peptidyl-tRNA molecules trapped in stalled 50S ribosomal subunits, and thus maintains levels of free tRNAs and 50S ribosomes. The sequence is that of Peptidyl-tRNA hydrolase from Hydrogenovibrio crunogenus (strain DSM 25203 / XCL-2) (Thiomicrospira crunogena).